We begin with the raw amino-acid sequence, 320 residues long: Epoxidase atD (320 aa).

N-linked (GlcNAc...) asparagine glycans are attached at residues Asn-245 and Asn-299.

It participates in secondary metabolite biosynthesis. Epoxidase; part of the gene cluster that mediates the biosynthesis of terreic acid, a quinone epoxide inhibitor of Bruton's tyrosine kinase. The first step of the pathway is the synthesis of 6-methylsalicylic acid (6-MSA) by the 6-methylsalicylic acid synthase atX. In the biosynthesis of 6-MSA, atX utilizes one acetyl-CoA and three malonyl-CoAs as its substrates and catalyzes a series of programmed reactions including Claisen condensation, reduction, aldol cyclization, and the hydrolytic cleavage that yields 6-MSA. The 6-methylsalicylate 1-monooxygenase atA then catalyzes the decarboxylative hydroxylation of 6-MSA to 3-methylcatechol. The next step is the conversion of 3-methylcatechol to 3-methyl-1,2,4-benzenetriol by cytochrome P450 monooxygenase atE, which is enhanced by cytochrome P450 monooxygenase atG. Then, the epoxidase atD catalyzes the epoxidation and hydroxyl oxidation of 3-methyl-1,2,4-benzenetriol to terremutin. Lastly, GMC oxidoreductase atC oxidizes terremutin to terreic acid. The sequence is that of Epoxidase atD from Aspergillus terreus (strain NIH 2624 / FGSC A1156).